We begin with the raw amino-acid sequence, 195 residues long: Pyridoxal 5'-phosphate synthase subunit PdxT (195 aa).

46–48 (GES) is a binding site for L-glutamine. Cys78 acts as the Nucleophile in catalysis. Residues Arg105 and 133–134 (IR) contribute to the L-glutamine site. Active-site charge relay system residues include His169 and Glu171.

It belongs to the glutaminase PdxT/SNO family. As to quaternary structure, in the presence of PdxS, forms a dodecamer of heterodimers. Only shows activity in the heterodimer.

It carries out the reaction aldehydo-D-ribose 5-phosphate + D-glyceraldehyde 3-phosphate + L-glutamine = pyridoxal 5'-phosphate + L-glutamate + phosphate + 3 H2O + H(+). The enzyme catalyses L-glutamine + H2O = L-glutamate + NH4(+). The protein operates within cofactor biosynthesis; pyridoxal 5'-phosphate biosynthesis. Its function is as follows. Catalyzes the hydrolysis of glutamine to glutamate and ammonia as part of the biosynthesis of pyridoxal 5'-phosphate. The resulting ammonia molecule is channeled to the active site of PdxS. The polypeptide is Pyridoxal 5'-phosphate synthase subunit PdxT (Shouchella clausii (strain KSM-K16) (Alkalihalobacillus clausii)).